The chain runs to 456 residues: tRNA-2-methylthio-N(6)-dimethylallyladenosine synthase (456 aa).

Positions lysine 2–arginine 119 constitute an MTTase N-terminal domain. The [4Fe-4S] cluster site is built by cysteine 11, cysteine 48, cysteine 82, cysteine 156, cysteine 160, and cysteine 163. One can recognise a Radical SAM core domain in the interval arginine 142–arginine 375. One can recognise a TRAM domain in the interval glutamine 378–glutamate 448.

Belongs to the methylthiotransferase family. MiaB subfamily. Monomer. The cofactor is [4Fe-4S] cluster.

The protein resides in the cytoplasm. The catalysed reaction is N(6)-dimethylallyladenosine(37) in tRNA + (sulfur carrier)-SH + AH2 + 2 S-adenosyl-L-methionine = 2-methylsulfanyl-N(6)-dimethylallyladenosine(37) in tRNA + (sulfur carrier)-H + 5'-deoxyadenosine + L-methionine + A + S-adenosyl-L-homocysteine + 2 H(+). In terms of biological role, catalyzes the methylthiolation of N6-(dimethylallyl)adenosine (i(6)A), leading to the formation of 2-methylthio-N6-(dimethylallyl)adenosine (ms(2)i(6)A) at position 37 in tRNAs that read codons beginning with uridine. The sequence is that of tRNA-2-methylthio-N(6)-dimethylallyladenosine synthase from Ralstonia pickettii (strain 12J).